The sequence spans 310 residues: Cytochrome f (310 aa).

Positions 1-23 are cleaved as a signal peptide; that stretch reads MRRLLSSTFAALIVGLAVFSAPA. Tyr28, Cys48, Cys51, and His52 together coordinate heme. Residues 277-297 form a helical membrane-spanning segment; it reads IYGMLAFFAAVALAQIMLVLK.

It belongs to the cytochrome f family. The 4 large subunits of the cytochrome b6-f complex are cytochrome b6, subunit IV (17 kDa polypeptide, PetD), cytochrome f and the Rieske protein, while the 4 small subunits are PetG, PetL, PetM and PetN. The complex functions as a dimer. Heme serves as cofactor.

It is found in the cellular thylakoid membrane. Functionally, component of the cytochrome b6-f complex, which mediates electron transfer between photosystem II (PSII) and photosystem I (PSI), cyclic electron flow around PSI, and state transitions. The protein is Cytochrome f of Synechococcus sp. (strain CC9311).